Here is a 500-residue protein sequence, read N- to C-terminus: MNSFPWLTIIVVFPILTGSLIFLLPHRGNKVMKWYTLCICILELLLTTYTFCYHFQLDDPLTQLTENYKWIHFFDFYWRLGIDGLSIGPILLTGFITTLATLAAWPVTRDAQLFHFLMLAMYSGQIGSFSSRDLLLFFLMWEFELIPVYLLLSMWGGKKRLYSATKFILYTAGGSIFLLIGVLGIGLYGSNEPTLNFETLANQSYPVALEVIFYVGFLIAFAVKLPIIPFHTWLPDTHGEAHYSTCMLLAGILLKMGAYGLVRINMELLPHAHCLFSPGLIIVGAIQIIYAASTSPGQLNLKKRIAYSSISHMGFIIIGIGSLSDTGLNGAILQIISHGFIGAALFFLAGTSYDRIRLLYLDEMGGMAIPLPKLFTMLSILSMASLALPGLSGFVAELLVFFGIITSQKYLLMPKILIAFLMAIGMILTPIYSLSMLRQMFYGYKLFNVPNYYFFDSGPRELFVSISLLLPIIGIGIYPDFVLSLSVEKVEAIISHFFFR.

The next 14 helical transmembrane spans lie at 4 to 24 (FPWL…IFLL), 37 to 57 (LCIC…HFQL), 87 to 107 (IGPI…AWPV), 111 to 131 (AQLF…SFSS), 134 to 154 (LLLF…LLSM), 167 to 187 (FILY…GIGL), 208 to 228 (ALEV…LPII), 242 to 262 (HYST…YGLV), 272 to 292 (AHCL…IYAA), 305 to 325 (IAYS…SLSD), 330 to 350 (GAIL…FLAG), 386 to 406 (LALP…GIIT), 416 to 436 (ILIA…SLSM), and 462 to 482 (LFVS…PDFV).

Belongs to the complex I subunit 4 family.

The protein localises to the plastid. Its subcellular location is the chloroplast thylakoid membrane. The enzyme catalyses a plastoquinone + NADH + (n+1) H(+)(in) = a plastoquinol + NAD(+) + n H(+)(out). It carries out the reaction a plastoquinone + NADPH + (n+1) H(+)(in) = a plastoquinol + NADP(+) + n H(+)(out). The protein is NAD(P)H-quinone oxidoreductase chain 4, chloroplastic of Oenothera biennis (German evening primrose).